A 370-amino-acid polypeptide reads, in one-letter code: Small ribosomal subunit biogenesis GTPase RsgA (370 aa).

The 159-residue stretch at 97–255 folds into the CP-type G domain; sequence QTQLDRPPIA…LADTPGFNQP (159 aa). GTP contacts are provided by residues 146-149 and 197-205; these read NKSD and GPSGVGKSS. Cys-280, Cys-285, His-287, and Cys-293 together coordinate Zn(2+). A disordered region spans residues 328–370; the sequence is TLKLKTKGKGQSQYEPKLESKKYRRTSRRTQVQGLQDLYQEEE.

This sequence belongs to the TRAFAC class YlqF/YawG GTPase family. RsgA subfamily. As to quaternary structure, monomer. Associates with 30S ribosomal subunit, binds 16S rRNA. The cofactor is Zn(2+).

The protein resides in the cytoplasm. Functionally, one of several proteins that assist in the late maturation steps of the functional core of the 30S ribosomal subunit. Helps release RbfA from mature subunits. May play a role in the assembly of ribosomal proteins into the subunit. Circularly permuted GTPase that catalyzes slow GTP hydrolysis, GTPase activity is stimulated by the 30S ribosomal subunit. The protein is Small ribosomal subunit biogenesis GTPase RsgA of Trichormus variabilis (strain ATCC 29413 / PCC 7937) (Anabaena variabilis).